Here is a 555-residue protein sequence, read N- to C-terminus: Wee1-like protein kinase 2-A (555 aa).

Disordered regions lie at residues 1–81 and 149–175; these read MRTA…SVGA and FTPE…DCRT. Polar residues predominate over residues 38-48; that stretch reads SPVSSWRTNNC. Over residues 68 to 78 the composition is skewed to low complexity; sequence SPSSDYSPDPS. Residues 149 to 160 show a composition bias toward polar residues; sequence FTPESYRQTHFQ. One can recognise a Protein kinase domain in the interval 210 to 480; it reads FLEIEKIGAG…AASLAKNSVL (271 aa). ATP is bound by residues 216 to 224 and Lys-239; that span reads IGAGEFGSV. Catalysis depends on Asp-337, which acts as the Proton acceptor. Mg(2+) is bound by residues Asn-342 and Asp-374. Residues 487–513 are a coiled coil; sequence AAQLQKQLNVEKFKTAMLERELKAAKL. At Ser-549 the chain carries Phosphoserine.

Belongs to the protein kinase superfamily. Ser/Thr protein kinase family. WEE1 subfamily. As to quaternary structure, interacts with prmt5; this promotes protesomal degradation of wee2-a in the nucleus. The interaction with prmt5 is disrupted upon activation of the DNA replication checkpoint. Subject to proteasomal degradation in the nucleus. As to expression, detected in egg (at protein level). Oocyte-specific maternally supplied protein. Present in immature and mature oocytes and in early (pregastrula) embryos, but not in post-gastrula embryos.

The protein resides in the nucleus. Its subcellular location is the cytoplasm. The protein localises to the cytosol. The catalysed reaction is L-tyrosyl-[protein] + ATP = O-phospho-L-tyrosyl-[protein] + ADP + H(+). Its function is as follows. Oocyte-specific protein tyrosine kinase that phosphorylates and inhibits cdk1 and acts as a key regulator of meiosis. Required to maintain meiotic arrest in oocytes by phosphorylating cdk1 at 'Tyr-15', which inhibits cdk1 activity and prevents meiotic reentry. Negative regulator of mitosis. Involved in the mitotic DNA replication checkpoint. The sequence is that of Wee1-like protein kinase 2-A (wee2-a) from Xenopus laevis (African clawed frog).